Here is an 83-residue protein sequence, read N- to C-terminus: Beta-defensin 19 (83 aa).

Residues 1 to 19 form the signal peptide; that stretch reads MRLALLLLAILVATELVVS. 3 cysteine pairs are disulfide-bonded: Cys27/Cys54, Cys34/Cys48, and Cys38/Cys55.

This sequence belongs to the beta-defensin family. As to expression, specifically expressed in male gonads (Sertoli cells).

Its subcellular location is the secreted. Its function is as follows. Has antibacterial activity. This chain is Beta-defensin 19 (Defb19), found in Mus musculus (Mouse).